Consider the following 131-residue polypeptide: Profilin-7 (131 aa).

A disulfide bridge connects residues cysteine 13 and cysteine 115. An Involved in PIP2 interaction motif is present at residues 81–97 (AVIRGKKGAGGITIKKT). At threonine 111 the chain carries Phosphothreonine.

It belongs to the profilin family. As to quaternary structure, occurs in many kinds of cells as a complex with monomeric actin in a 1:1 ratio. Post-translationally, phosphorylated by MAP kinases.

It localises to the cytoplasm. Its subcellular location is the cytoskeleton. Its function is as follows. Binds to actin and affects the structure of the cytoskeleton. At high concentrations, profilin prevents the polymerization of actin, whereas it enhances it at low concentrations. This is Profilin-7 from Olea europaea (Common olive).